Consider the following 527-residue polypeptide: Probable protein kinase UbiB (527 aa).

A helical membrane pass occupies residues glutamate 23–tryptophan 43. Positions arginine 125–leucine 488 constitute a Protein kinase domain. ATP-binding positions include leucine 131–valine 139 and lysine 153. Aspartate 288 serves as the catalytic Proton acceptor. The helical transmembrane segment at leucine 504–valine 524 threads the bilayer.

It belongs to the ABC1 family. UbiB subfamily.

It is found in the cell inner membrane. It functions in the pathway cofactor biosynthesis; ubiquinone biosynthesis [regulation]. In terms of biological role, is probably a protein kinase regulator of UbiI activity which is involved in aerobic coenzyme Q (ubiquinone) biosynthesis. The chain is Probable protein kinase UbiB from Ectopseudomonas mendocina (strain ymp) (Pseudomonas mendocina).